The chain runs to 174 residues: Acetolactate synthase small subunit (174 aa).

Residues 4-78 form the ACT domain; it reads TLSVLVQDEA…NILNVQDVTN (75 aa).

Belongs to the acetolactate synthase small subunit family. Dimer of large and small chains.

The protein localises to the plastid. It localises to the chloroplast. The enzyme catalyses 2 pyruvate + H(+) = (2S)-2-acetolactate + CO2. Its pathway is amino-acid biosynthesis; L-isoleucine biosynthesis; L-isoleucine from 2-oxobutanoate: step 1/4. It functions in the pathway amino-acid biosynthesis; L-valine biosynthesis; L-valine from pyruvate: step 1/4. This is Acetolactate synthase small subunit (ilvH) from Porphyra purpurea (Red seaweed).